Here is a 407-residue protein sequence, read N- to C-terminus: B3 domain-containing protein Os07g0183200 (407 aa).

A DNA-binding region (TF-B3) is located at residues 124-227; the sequence is FVKTLMISDF…ELYVGVRRQR (104 aa).

The protein resides in the nucleus. This is B3 domain-containing protein Os07g0183200 from Oryza sativa subsp. japonica (Rice).